A 602-amino-acid chain; its full sequence is Protein NRT1/ PTR FAMILY 5.7 (602 aa).

The next 2 membrane-spanning stretches (helical) occupy residues 56 to 73 and 87 to 107; these read LSYFGISTNLVVYLTTIL and WSGVTTLMPLLGGFVADAYLG. Thr111 carries the post-translational modification Phosphothreonine. 10 consecutive transmembrane segments (helical) span residues 112 to 132, 152 to 172, 197 to 217, 220 to 240, 337 to 357, 381 to 401, 422 to 442, 465 to 485, 500 to 520, and 548 to 568; these read VLLATTIYLMGLILLTLSWFI, IAFFIAIYLISIGTGGHKPSL, WWNAGLCAGILTAVTVIVYIE, IGWGVASIILTIVMATSFFIF, VKLLINMIPIWFFTLAFGVCA, IVPPASLFSLIALSIIITVTI, ILQRIGVGMVFSLFAMIIAAL, IWLAPQFLVLGVADAFTLVGL, LGIAFYLSVLGAASFVNNLLI, and FYWMLAALTAANICCFVIVAM.

It belongs to the major facilitator superfamily. Proton-dependent oligopeptide transporter (POT/PTR) (TC 2.A.17) family. Expressed in shoots, stems, leaves and flowers.

The protein localises to the membrane. The chain is Protein NRT1/ PTR FAMILY 5.7 (NPF5.7) from Arabidopsis thaliana (Mouse-ear cress).